Reading from the N-terminus, the 229-residue chain is Peptidase E (229 aa).

Catalysis depends on charge relay system residues Ser-120, Asp-135, and His-157.

Belongs to the peptidase S51 family.

Its subcellular location is the cytoplasm. It catalyses the reaction Dipeptidase E catalyzes the hydrolysis of dipeptides Asp-|-Xaa. It does not act on peptides with N-terminal Glu, Asn or Gln, nor does it cleave isoaspartyl peptides.. In terms of biological role, hydrolyzes dipeptides containing N-terminal aspartate residues. May play a role in allowing the cell to use peptide aspartate to spare carbon otherwise required for the synthesis of the aspartate family of amino acids. The sequence is that of Peptidase E from Escherichia coli O6:K15:H31 (strain 536 / UPEC).